We begin with the raw amino-acid sequence, 449 residues long: Interferon-related developmental regulator 1 (449 aa).

The span at 1 to 10 (MPKNKKRNAP) shows a compositional bias: basic residues. A disordered region spans residues 1–41 (MPKNKKRNAPHRGGGGGGGSGAATSAATTGGPHRTVQPFSD). The span at 12–21 (RGGGGGGGSG) shows a compositional bias: gly residues. Residues 22-31 (AATSAATTGG) show a composition bias toward low complexity.

It belongs to the IFRD family. Interacts with PSIP1/LEDGF. In terms of tissue distribution, expressed at high levels in the embryonic brain in the period related to neuroblast proliferation and differentiation.

Its subcellular location is the cytoplasm. It is found in the cell membrane. It localises to the nucleus. Probably participates in neurogenesis. Could play a role in regulating gene activity in the proliferative and/or differentiative pathways induced by NGF. This Rattus norvegicus (Rat) protein is Interferon-related developmental regulator 1 (Ifrd1).